The primary structure comprises 37 residues: Peptide encoded by miPEP164a (37 aa).

In terms of biological role, regulatory peptide encoded by the primary transcript (pri-miR164a) of the microRNA miR164a that enhances the accumulation of its corresponding mature miRNA. Acts probably as a transcriptional activator of its corresponding pri-miRNA. This is Peptide encoded by miPEP164a from Arabidopsis thaliana (Mouse-ear cress).